The primary structure comprises 431 residues: Glutamate-1-semialdehyde 2,1-aminomutase (431 aa).

Lys-265 is subject to N6-(pyridoxal phosphate)lysine.

The protein belongs to the class-III pyridoxal-phosphate-dependent aminotransferase family. HemL subfamily. Homodimer. It depends on pyridoxal 5'-phosphate as a cofactor.

It localises to the cytoplasm. It catalyses the reaction (S)-4-amino-5-oxopentanoate = 5-aminolevulinate. Its pathway is porphyrin-containing compound metabolism; protoporphyrin-IX biosynthesis; 5-aminolevulinate from L-glutamyl-tRNA(Glu): step 2/2. In Vibrio vulnificus (strain YJ016), this protein is Glutamate-1-semialdehyde 2,1-aminomutase.